Here is a 108-residue protein sequence, read N- to C-terminus: uncharacterized protein (108 aa).

Residues 48-73 show a composition bias toward low complexity; sequence NSNIPSSSSSSPSFASFFSSTSTSAT. A disordered region spans residues 48 to 81; the sequence is NSNIPSSSSSSPSFASFFSSTSTSATLNGSSNNK.

This is an uncharacterized protein from Dictyostelium discoideum (Social amoeba).